The following is a 168-amino-acid chain: Protein SprT (168 aa).

In terms of domain architecture, SprT-like spans 20–166; that stretch reads EKLQQANKYL…RHCQAILQLI (147 aa). Position 78 (His-78) interacts with Zn(2+). Glu-79 is a catalytic residue. His-82 contributes to the Zn(2+) binding site.

It belongs to the SprT family. Requires Zn(2+) as cofactor.

It localises to the cytoplasm. This Proteus mirabilis (strain HI4320) protein is Protein SprT.